A 280-amino-acid chain; its full sequence is Large ribosomal subunit protein uL2 (280 aa).

Disordered stretches follow at residues 1-58 (MAIR…GGGH) and 226-280 (MNPV…KHGR). Basic residues-rich tracts occupy residues 37 to 58 (LHGH…GGGH) and 268 to 280 (IVRR…KHGR).

Belongs to the universal ribosomal protein uL2 family. In terms of assembly, part of the 50S ribosomal subunit. Forms a bridge to the 30S subunit in the 70S ribosome.

One of the primary rRNA binding proteins. Required for association of the 30S and 50S subunits to form the 70S ribosome, for tRNA binding and peptide bond formation. It has been suggested to have peptidyltransferase activity; this is somewhat controversial. Makes several contacts with the 16S rRNA in the 70S ribosome. The polypeptide is Large ribosomal subunit protein uL2 (Mycolicibacterium paratuberculosis (strain ATCC BAA-968 / K-10) (Mycobacterium paratuberculosis)).